A 557-amino-acid polypeptide reads, in one-letter code: Small ribosomal subunit protein bS1 (557 aa).

4 consecutive S1 motif domains span residues 21-87 (GSIV…LSRE), 105-171 (AETV…VSRR), 192-260 (GMEV…LGLK), and 277-347 (GTKL…LGLK). Residues Lys229, Lys279, and Lys363 each carry the N6-acetyllysine modification. 2 S1 motif domains span residues 364–434 (GDRV…LGVK) and 451–520 (GAIV…LSVR).

The protein belongs to the bacterial ribosomal protein bS1 family. As to quaternary structure, part of the 30S ribosomal subunit. Some nascent polypeptide chains are able to cross-link to this protein in situ. Can be cross-linked to mRNA in the ribosome. Phosphorylated; probably on a serine.

Functionally, required for translation of most natural mRNAs except for leaderless mRNA. Binds mRNA upstream of the Shine-Dalgarno (SD) sequence and helps it bind to the 30S ribosomal subunit; acts as an RNA chaperone to unfold structured mRNA on the ribosome but is not essential for mRNAs with strong SDs and little 5'-UTR structure, thus it may help fine-tune which mRNAs that are translated. Unwinds dsRNA by binding to transiently formed ssRNA regions; binds about 10 nucleotides. Has a preference for polypyrimidine tracts. Negatively autoregulates its own translation. The sequence is that of Small ribosomal subunit protein bS1 (rpsA) from Escherichia coli O157:H7.